Consider the following 465-residue polypeptide: Midnolin (465 aa).

A Ubiquitin-like domain is found at 32 to 106; that stretch reads MSLAIHSTTG…LTLVPTVEAG (75 aa). Disordered stretches follow at residues 185–262 and 400–445; these read SVAT…SRKP and RLRR…GLDF. Composition is skewed to low complexity over residues 195–219 and 240–257; these read RPVS…PSPV and SPPA…SPTP. Residues 397-424 are required for nucleolar localization; the sequence is QQKRLRRKARRDARGPYHWTPSRKAGRS.

In terms of assembly, interacts with GCK; the interaction occurs preferentially at low glucose levels. Interacts with the proteasome. In terms of tissue distribution, expressed at high levels in brain and liver with significantly lower levels in muscle.

The protein localises to the nucleus. It is found in the cytoplasm. It localises to the cytosol. Its subcellular location is the nucleolus. Functionally, facilitates the ubiquitin-independent proteasomal degradation of stimulus-induced transcription factors such as FOSB, EGR1, NR4A1, and IRF4 to the proteasome for degradation. Promotes also the degradation of other substrates such as CBX4. Plays a role in inhibiting the activity of glucokinase GCK and both glucose-induced and basal insulin secretion. The polypeptide is Midnolin (Midn) (Mus musculus (Mouse)).